We begin with the raw amino-acid sequence, 68 residues long: DNA-directed RNA polymerase subunit omega (68 aa).

Belongs to the RNA polymerase subunit omega family. The RNAP catalytic core consists of 2 alpha, 1 beta, 1 beta' and 1 omega subunit. When a sigma factor is associated with the core the holoenzyme is formed, which can initiate transcription.

The catalysed reaction is RNA(n) + a ribonucleoside 5'-triphosphate = RNA(n+1) + diphosphate. In terms of biological role, promotes RNA polymerase assembly. Latches the N- and C-terminal regions of the beta' subunit thereby facilitating its interaction with the beta and alpha subunits. The sequence is that of DNA-directed RNA polymerase subunit omega from Alkaliphilus metalliredigens (strain QYMF).